We begin with the raw amino-acid sequence, 1463 residues long: Clustered mitochondria protein homolog (1463 aa).

A disordered region spans residues 1-79; it reads MAKNKKQNGK…ETEQQQQQQE (79 aa). Residues 10–22 show a composition bias toward low complexity; sequence KAKTPPVVAAAAG. The Clu domain maps to 374 to 616; the sequence is RAEDTFSSKL…RTFPPDVNFL (243 aa). 3 disordered regions span residues 684 to 753, 942 to 988, and 1387 to 1463; these read AQKT…SEDA, GDGQ…SVPS, and QKEA…RRKS. The segment covering 692-702 has biased composition (low complexity); that stretch reads KQAAIEAAAPA. Residues 703 to 731 are compositionally biased toward basic and acidic residues; it reads EGDKTPAKDAKDGKEAGKDANDGKEEGST. The span at 955 to 964 shows a compositional bias: basic residues; it reads GGKKQNKQSK. Positions 965–980 are enriched in gly residues; that stretch reads RGGGGGGGKGAAGGGR. A compositionally biased stretch (low complexity) spans 1438-1456; the sequence is AEAASHTAGGAAANTAAPA.

The protein belongs to the CLU family.

Its subcellular location is the cytoplasm. Functionally, mRNA-binding protein involved in proper cytoplasmic distribution of mitochondria. The protein is Clustered mitochondria protein homolog of Anopheles gambiae (African malaria mosquito).